Consider the following 472-residue polypeptide: Exodeoxyribonuclease 7 large subunit (472 aa).

Belongs to the XseA family. As to quaternary structure, heterooligomer composed of large and small subunits.

It is found in the cytoplasm. It catalyses the reaction Exonucleolytic cleavage in either 5'- to 3'- or 3'- to 5'-direction to yield nucleoside 5'-phosphates.. Its function is as follows. Bidirectionally degrades single-stranded DNA into large acid-insoluble oligonucleotides, which are then degraded further into small acid-soluble oligonucleotides. This chain is Exodeoxyribonuclease 7 large subunit, found in Carboxydothermus hydrogenoformans (strain ATCC BAA-161 / DSM 6008 / Z-2901).